Consider the following 157-residue polypeptide: 2-C-methyl-D-erythritol 2,4-cyclodiphosphate synthase (157 aa).

A divalent metal cation is bound by residues D8 and H10. 4-CDP-2-C-methyl-D-erythritol 2-phosphate is bound by residues 8–10 (DVH) and 34–35 (HS). H42 is an a divalent metal cation binding site. Residues 56 to 58 (DIG), 61 to 65 (FPDTD), 132 to 135 (TTTE), F139, and R142 each bind 4-CDP-2-C-methyl-D-erythritol 2-phosphate.

The protein belongs to the IspF family. As to quaternary structure, homotrimer. Requires a divalent metal cation as cofactor.

The enzyme catalyses 4-CDP-2-C-methyl-D-erythritol 2-phosphate = 2-C-methyl-D-erythritol 2,4-cyclic diphosphate + CMP. The protein operates within isoprenoid biosynthesis; isopentenyl diphosphate biosynthesis via DXP pathway; isopentenyl diphosphate from 1-deoxy-D-xylulose 5-phosphate: step 4/6. Functionally, involved in the biosynthesis of isopentenyl diphosphate (IPP) and dimethylallyl diphosphate (DMAPP), two major building blocks of isoprenoid compounds. Catalyzes the conversion of 4-diphosphocytidyl-2-C-methyl-D-erythritol 2-phosphate (CDP-ME2P) to 2-C-methyl-D-erythritol 2,4-cyclodiphosphate (ME-CPP) with a corresponding release of cytidine 5-monophosphate (CMP). The protein is 2-C-methyl-D-erythritol 2,4-cyclodiphosphate synthase of Pseudomonas putida (strain W619).